Reading from the N-terminus, the 141-residue chain is Hemoglobin subunit alpha (141 aa).

In terms of domain architecture, Globin spans 1–141 (VLSAADKTHV…VSTVLVSKYR (141 aa)). S3 carries the phosphoserine modification. K7 carries the N6-succinyllysine modification. T8 carries the post-translational modification Phosphothreonine. Residue K11 is modified to N6-succinyllysine. Residue K16 is modified to N6-acetyllysine; alternate. Position 16 is an N6-succinyllysine; alternate (K16). S35 bears the Phosphoserine mark. K40 carries the N6-succinyllysine modification. S49 carries the post-translational modification Phosphoserine. H58 contributes to the O2 binding site. H87 is a heme b binding site. S102 bears the Phosphoserine mark. The residue at position 108 (T108) is a Phosphothreonine. S124 is subject to Phosphoserine. T134 bears the Phosphothreonine mark. S138 is subject to Phosphoserine.

This sequence belongs to the globin family. Heterotetramer of two alpha chains and two beta chains. As to expression, red blood cells.

Involved in oxygen transport from the lung to the various peripheral tissues. Its function is as follows. Hemopressin acts as an antagonist peptide of the cannabinoid receptor CNR1. Hemopressin-binding efficiently blocks cannabinoid receptor CNR1 and subsequent signaling. The protein is Hemoglobin subunit alpha (HBA) of Dasypus novemcinctus (Nine-banded armadillo).